The chain runs to 1014 residues: MSRRTRSRSPPRRSYNRERRDYRKYDDSEDQKGARYNRYVDDVSSRRDRHDSFRSHESNKIRRDNSWKHDKYSYEKRYQERDREYARSKNIPDQYIGRSPRPTSHRHAEEKEVDNKTKSDETNPVLQGSATEIKPQPRRSRFDRTERVGASLSVSEIQSENPRVDVIPKDKAVENNHQRNAEKPVASDKITDAKLLARLERVRAWKESKAKQEASKKEEHKLNTKPQVTAKDQNAMPSTGISGFEINRQKDTSDMKRNNRVHMDDEDGPRRMNLEDYQELWDQEDRGMLGNEQAASMEEDEVDPLDAYMASLVGTTDTIRPGLLNTEVIDPNANDDERMVISETLEEEENLLALAAKRSKKKDVITVDHSKINYEDFKKDFYVEPEELKNLSPAEVDELRASLDGIKIRGIDCPKPVTSWSQCGLSAQTISVINSLGYEKPTSIQAQAIPAITSGRDVIGVAKTGSGKTIAFLLPMFRHIKDQRPLKTGEGPIAIIMTPTRELAVQIFRECKPFLKLLNIRACCAYGGAPIKDQIADLKRGAEIVVCTPGRMIDVLSANAGRVTNLHRCTYLVLDEADRMFDLGFEPQVMRIINNIRPDRQTVLFSATFPRAMEALARKVLKKPVEITVGGRSVVASEVEQIVEVRPEESKFSRLLELLGELYNNQLDVRTLVFVDRQESADALLSDLMKRGYTSNSIHGGKDQHDRDSTISDYKAGVFDVLIATSVVARGLDVKSLQLVVNYDCPNHMEDYVHRVGRTGRAGHTGVAVTFITPEQEKYAVDIAKALKMSKQPVPKELQTLASQFLEKVKAGKEKAAGGGFGGKGLSRLDETRNAERKMQRKAYGEDEEDVETEAEAKSPLEKITPEKSTGDPTLDRVRAAVGGIAARAFANQTAQSNKLTQPISIIKTDGDEYKAKMEINDYPQQARWAVTNNTNIVHVTELTGTSITTKGNFYLPGKNPEPGEEKLYLWIEGPSELVVNRAITELRRLLLEGINHSLEGGNKPSASGRYTVV.

Residues 1 to 11 (MSRRTRSRSPP) are compositionally biased toward basic residues. Residues 1–149 (MSRRTRSRSP…SRFDRTERVG (149 aa)) are disordered. Composition is skewed to basic and acidic residues over residues 15 to 87 (YNRE…EYAR) and 106 to 121 (RHAE…KSDE). The Q motif signature appears at 418–446 (TSWSQCGLSAQTISVINSLGYEKPTSIQA). Residues 449–627 (IPAITSGRDV…RKVLKKPVEI (179 aa)) form the Helicase ATP-binding domain. Residue 462–469 (AKTGSGKT) coordinates ATP. Residues 575 to 578 (DEAD) carry the DEAD box motif. One can recognise a Helicase C-terminal domain in the interval 638–802 (EVEQIVEVRP…PVPKELQTLA (165 aa)). Residues 815 to 875 (KAAGGGFGGK…PEKSTGDPTL (61 aa)) form a disordered region. 2 stretches are compositionally biased toward basic and acidic residues: residues 827 to 838 (SRLDETRNAERK) and 855 to 875 (AEAK…DPTL).

This sequence belongs to the DEAD box helicase family. DDX46/PRP5 subfamily.

Its subcellular location is the nucleus. It catalyses the reaction ATP + H2O = ADP + phosphate + H(+). ATP-dependent RNA helicase involved in pre-spliceosome/complex A assembly and mRNA splicing. Bridges U1 and U2 snRNPs during pre-spliceosome assembly and enables stable U2 snRNP association with intron RNA. Through its helicase activity probably catalyzes an ATP-dependent conformational change of U2 snRNP. This Schizosaccharomyces pombe (strain 972 / ATCC 24843) (Fission yeast) protein is Pre-mRNA-processing ATP-dependent RNA helicase prp11 (prp11).